We begin with the raw amino-acid sequence, 160 residues long: MTKKKAHKPGSATIALNKRARHEYFIEEEFEAGLALQGWEVKSLRAGKANIGDSYVILKDGEAWLFGANFTPMAVASTHVVCDPTRTRKLLLNQRELDSLYGRINREGYTVVALSLYWKNAWCKVKIGVAKGKKQHDKRSDLKEREWQLDKARIMKNAGR.

It belongs to the SmpB family.

Its subcellular location is the cytoplasm. In terms of biological role, required for rescue of stalled ribosomes mediated by trans-translation. Binds to transfer-messenger RNA (tmRNA), required for stable association of tmRNA with ribosomes. tmRNA and SmpB together mimic tRNA shape, replacing the anticodon stem-loop with SmpB. tmRNA is encoded by the ssrA gene; the 2 termini fold to resemble tRNA(Ala) and it encodes a 'tag peptide', a short internal open reading frame. During trans-translation Ala-aminoacylated tmRNA acts like a tRNA, entering the A-site of stalled ribosomes, displacing the stalled mRNA. The ribosome then switches to translate the ORF on the tmRNA; the nascent peptide is terminated with the 'tag peptide' encoded by the tmRNA and targeted for degradation. The ribosome is freed to recommence translation, which seems to be the essential function of trans-translation. The chain is SsrA-binding protein from Salmonella agona (strain SL483).